The primary structure comprises 902 residues: DNA mismatch repair protein MutS (902 aa).

647–654 (GPNMGGKS) is an ATP binding site.

The protein belongs to the DNA mismatch repair MutS family.

In terms of biological role, this protein is involved in the repair of mismatches in DNA. It is possible that it carries out the mismatch recognition step. This protein has a weak ATPase activity. The sequence is that of DNA mismatch repair protein MutS from Nitrosospira multiformis (strain ATCC 25196 / NCIMB 11849 / C 71).